Consider the following 158-residue polypeptide: 3-dehydroquinate dehydratase (158 aa).

Catalysis depends on Tyr24, which acts as the Proton acceptor. Positions 75, 81, and 88 each coordinate substrate. His101 (proton donor) is an active-site residue. Residues 102–103 (LS) and Arg112 each bind substrate.

It belongs to the type-II 3-dehydroquinase family. Homododecamer.

The enzyme catalyses 3-dehydroquinate = 3-dehydroshikimate + H2O. It functions in the pathway metabolic intermediate biosynthesis; chorismate biosynthesis; chorismate from D-erythrose 4-phosphate and phosphoenolpyruvate: step 3/7. In terms of biological role, catalyzes a trans-dehydration via an enolate intermediate. The polypeptide is 3-dehydroquinate dehydratase (Bartonella bacilliformis (strain ATCC 35685 / KC583 / Herrer 020/F12,63)).